The primary structure comprises 291 residues: Pantothenate synthetase (291 aa).

30–37 is an ATP binding site; sequence MGYLHVGH. The active-site Proton donor is histidine 37. Glutamine 61 is a (R)-pantoate binding site. Glutamine 61 serves as a coordination point for beta-alanine. 147–150 serves as a coordination point for ATP; that stretch reads GEKD. Glutamine 153 contributes to the (R)-pantoate binding site. ATP contacts are provided by residues valine 176 and 184 to 187; that span reads CSSR.

The protein belongs to the pantothenate synthetase family. Homodimer.

It localises to the cytoplasm. It carries out the reaction (R)-pantoate + beta-alanine + ATP = (R)-pantothenate + AMP + diphosphate + H(+). It participates in cofactor biosynthesis; (R)-pantothenate biosynthesis; (R)-pantothenate from (R)-pantoate and beta-alanine: step 1/1. Its function is as follows. Catalyzes the condensation of pantoate with beta-alanine in an ATP-dependent reaction via a pantoyl-adenylate intermediate. This chain is Pantothenate synthetase, found in Rhizobium meliloti (strain 1021) (Ensifer meliloti).